Consider the following 474-residue polypeptide: ATP synthase subunit beta (474 aa).

152 to 159 (GGAGVGKT) serves as a coordination point for ATP.

Belongs to the ATPase alpha/beta chains family. In terms of assembly, F-type ATPases have 2 components, CF(1) - the catalytic core - and CF(0) - the membrane proton channel. CF(1) has five subunits: alpha(3), beta(3), gamma(1), delta(1), epsilon(1). CF(0) has three main subunits: a(1), b(2) and c(9-12). The alpha and beta chains form an alternating ring which encloses part of the gamma chain. CF(1) is attached to CF(0) by a central stalk formed by the gamma and epsilon chains, while a peripheral stalk is formed by the delta and b chains.

It is found in the cell inner membrane. The enzyme catalyses ATP + H2O + 4 H(+)(in) = ADP + phosphate + 5 H(+)(out). Produces ATP from ADP in the presence of a proton gradient across the membrane. The catalytic sites are hosted primarily by the beta subunits. In Magnetococcus marinus (strain ATCC BAA-1437 / JCM 17883 / MC-1), this protein is ATP synthase subunit beta.